The primary structure comprises 313 residues: Ribose-phosphate pyrophosphokinase (313 aa).

ATP is bound by residues 40–42 (DGE) and 98–99 (RQ). 2 residues coordinate Mg(2+): His132 and Asp172. Lys195 is an active-site residue. D-ribose 5-phosphate contacts are provided by residues Arg197, Asp221, and 225–229 (DTAGT).

This sequence belongs to the ribose-phosphate pyrophosphokinase family. Class I subfamily. As to quaternary structure, homohexamer. It depends on Mg(2+) as a cofactor.

The protein localises to the cytoplasm. It catalyses the reaction D-ribose 5-phosphate + ATP = 5-phospho-alpha-D-ribose 1-diphosphate + AMP + H(+). It participates in metabolic intermediate biosynthesis; 5-phospho-alpha-D-ribose 1-diphosphate biosynthesis; 5-phospho-alpha-D-ribose 1-diphosphate from D-ribose 5-phosphate (route I): step 1/1. Functionally, involved in the biosynthesis of the central metabolite phospho-alpha-D-ribosyl-1-pyrophosphate (PRPP) via the transfer of pyrophosphoryl group from ATP to 1-hydroxyl of ribose-5-phosphate (Rib-5-P). The protein is Ribose-phosphate pyrophosphokinase of Porphyromonas gingivalis (strain ATCC BAA-308 / W83).